We begin with the raw amino-acid sequence, 56 residues long: Large ribosomal subunit protein eL40 (56 aa).

This sequence belongs to the eukaryotic ribosomal protein eL40 family.

This is Large ribosomal subunit protein eL40 from Sulfurisphaera tokodaii (strain DSM 16993 / JCM 10545 / NBRC 100140 / 7) (Sulfolobus tokodaii).